Here is a 382-residue protein sequence, read N- to C-terminus: Lipid-A-disaccharide synthase (382 aa).

This sequence belongs to the LpxB family.

It carries out the reaction 2-N,3-O-bis[(3R)-3-hydroxytetradecanoyl]-alpha-D-glucosaminyl 1-phosphate + UDP-2-N,3-O-bis[(3R)-3-hydroxytetradecanoyl]-alpha-D-glucosamine = lipid A disaccharide (E. coli) + UDP + H(+). It catalyses the reaction a lipid X + a UDP-2-N,3-O-bis[(3R)-3-hydroxyacyl]-alpha-D-glucosamine = a lipid A disaccharide + UDP + H(+). It participates in glycolipid biosynthesis; lipid IV(A) biosynthesis; lipid IV(A) from (3R)-3-hydroxytetradecanoyl-[acyl-carrier-protein] and UDP-N-acetyl-alpha-D-glucosamine: step 5/6. Condensation of UDP-2,3-diacylglucosamine and 2,3-diacylglucosamine-1-phosphate to form lipid A disaccharide, a precursor of lipid A, a phosphorylated glycolipid that anchors the lipopolysaccharide to the outer membrane of the cell. The sequence is that of Lipid-A-disaccharide synthase from Escherichia coli O45:K1 (strain S88 / ExPEC).